Reading from the N-terminus, the 775-residue chain is Putative late blight resistance protein homolog R1A-3 (775 aa).

A coiled-coil region spans residues 16 to 39 (PRMNEEIVGFEDVIENLRKKLLSE). Positions 17-237 (RMNEEIVGFE…LSEMEKEVEC (221 aa)) constitute an NB-ARC domain. Residue 50–57 (GMPGLGKT) participates in ATP binding. The HMA domain occupies 711 to 775 (IKKMILQFDI…VGKLIDSGML (65 aa)).

This sequence belongs to the disease resistance NB-LRR family.

Its subcellular location is the cytoplasm. It is found in the membrane. Confers resistance to late blight (Phytophthora infestans) races carrying the avirulence gene Avr1. Resistance proteins guard the plant against pathogens that contain an appropriate avirulence protein via an indirect interaction with this avirulence protein. That triggers a defense system including the hypersensitive response, which restricts the pathogen growth. The polypeptide is Putative late blight resistance protein homolog R1A-3 (R1A-3) (Solanum demissum (Wild potato)).